Here is a 116-residue protein sequence, read N- to C-terminus: Cysteine proteinase inhibitor 1 (116 aa).

The signal sequence occupies residues 1–22 (MVPKPLSLLLLLLLALSAAVVG). The 60-residue stretch at 30 to 89 (GGWRPIENLNSAEVQDVAQFAVSEHNKQANDELQYQSVVRGYTQVVAGTNYRLVIAAKDG) folds into the Cystatin domain. The Secondary area of contact signature appears at 73–77 (QVVAG). N109 is a glycosylation site (N-linked (GlcNAc...) asparagine).

This sequence belongs to the cystatin family. Phytocystatin subfamily.

The protein resides in the secreted. In terms of biological role, specific inhibitor of papain family cysteine proteinases. The chain is Cysteine proteinase inhibitor 1 from Actinidia chinensis var. chinensis (Chinese soft-hair kiwi).